We begin with the raw amino-acid sequence, 578 residues long: GTP diphosphokinase CRSH3, chloroplastic (578 aa).

Residues Met1 to Gly45 constitute a chloroplast transit peptide. The region spanning Ser99–Met199 is the HD domain. 2 EF-hand domains span residues Ala468–Gly503 and Asp506–Lys537. Ca(2+)-binding residues include Asp481, Asn483, Asp485, Arg487, Glu492, Asp515, Asn517, Asp519, Ser521, and Glu526.

Belongs to the RelA/SpoT family. As to expression, expressed in roots and shoots.

It is found in the plastid. It localises to the chloroplast. It catalyses the reaction GTP + ATP = guanosine 3'-diphosphate 5'-triphosphate + AMP. Activated by calcium. In terms of biological role, possesses calcium-dependent ppGpp (guanosine 3'-diphosphate 5'-diphosphate) synthetase activity in vitro and is able to functionally complement E.coli relA mutants. May be involved in a rapid plant ppGpp-mediated response to pathogens and other stresses. The polypeptide is GTP diphosphokinase CRSH3, chloroplastic (Oryza sativa subsp. japonica (Rice)).